Consider the following 880-residue polypeptide: DNA gyrase subunit A (880 aa).

Residues 35-530 (LPDVRDGLKP…ASGDIDLEDL (496 aa)) enclose the Topo IIA-type catalytic domain. The active-site O-(5'-phospho-DNA)-tyrosine intermediate is the Tyr123. The GyrA-box signature appears at 557–563 (QRRGGKG).

It belongs to the type II topoisomerase GyrA/ParC subunit family. Heterotetramer, composed of two GyrA and two GyrB chains. In the heterotetramer, GyrA contains the active site tyrosine that forms a transient covalent intermediate with DNA, while GyrB binds cofactors and catalyzes ATP hydrolysis.

The protein localises to the cytoplasm. The enzyme catalyses ATP-dependent breakage, passage and rejoining of double-stranded DNA.. Its function is as follows. A type II topoisomerase that negatively supercoils closed circular double-stranded (ds) DNA in an ATP-dependent manner to modulate DNA topology and maintain chromosomes in an underwound state. Negative supercoiling favors strand separation, and DNA replication, transcription, recombination and repair, all of which involve strand separation. Also able to catalyze the interconversion of other topological isomers of dsDNA rings, including catenanes and knotted rings. Type II topoisomerases break and join 2 DNA strands simultaneously in an ATP-dependent manner. This is DNA gyrase subunit A from Haemophilus influenzae (strain ATCC 51907 / DSM 11121 / KW20 / Rd).